A 483-amino-acid polypeptide reads, in one-letter code: Proline--tRNA ligase (483 aa).

The protein belongs to the class-II aminoacyl-tRNA synthetase family. ProS type 3 subfamily. Homodimer.

Its subcellular location is the cytoplasm. The catalysed reaction is tRNA(Pro) + L-proline + ATP = L-prolyl-tRNA(Pro) + AMP + diphosphate. In terms of biological role, catalyzes the attachment of proline to tRNA(Pro) in a two-step reaction: proline is first activated by ATP to form Pro-AMP and then transferred to the acceptor end of tRNA(Pro). This is Proline--tRNA ligase from Sulfurisphaera tokodaii (strain DSM 16993 / JCM 10545 / NBRC 100140 / 7) (Sulfolobus tokodaii).